We begin with the raw amino-acid sequence, 229 residues long: Dihydrofolate reductase (229 aa).

The DHFR domain maps to 11–227 (SITAVVAATA…VKYIFEMWVL (217 aa)). NADP(+)-binding positions include Ala17 and 23-29 (GIGLNGG). 37–42 (EMKYFA) contributes to the substrate binding site. 64–66 (RKT) provides a ligand contact to NADP(+). Arg80 contributes to the substrate binding site. NADP(+)-binding positions include 86–88 (SGK) and 127–134 (GGATLYTS).

The protein belongs to the dihydrofolate reductase family. In terms of assembly, monomer.

It catalyses the reaction (6S)-5,6,7,8-tetrahydrofolate + NADP(+) = 7,8-dihydrofolate + NADPH + H(+). It functions in the pathway cofactor biosynthesis; tetrahydrofolate biosynthesis; 5,6,7,8-tetrahydrofolate from 7,8-dihydrofolate: step 1/1. Its function is as follows. Key enzyme in folate metabolism. Catalyzes an essential reaction for de novo glycine and purine synthesis, and for DNA precursor synthesis. The sequence is that of Dihydrofolate reductase (DFR1) from Cryptococcus neoformans var. neoformans serotype D (strain JEC21 / ATCC MYA-565) (Filobasidiella neoformans).